The chain runs to 71 residues: Peptide Ctri10261 (71 aa).

The N-terminal stretch at 1 to 23 is a signal peptide; that stretch reads MKIPLILVTIAIILLMVPTESDA. Phenylalanine amide is present on Phe-37. A propeptide spanning residues 41-71 is cleaved from the precursor; it reads SLKNRDYFDYMQDPSLSNADLRELEELLEDY.

This sequence belongs to the non-disulfide-bridged peptide (NDBP) superfamily. Short antimicrobial peptide (group 4) family. In terms of tissue distribution, expressed by the venom gland.

The protein localises to the secreted. Antimicrobial peptide. This Chaerilus tricostatus (Scorpion) protein is Peptide Ctri10261.